A 681-amino-acid polypeptide reads, in one-letter code: Potassium-transporting ATPase ATP-binding subunit (681 aa).

4 consecutive transmembrane segments (helical) span residues 30-50 (LLVY…FFGI), 59-79 (LAIA…EAIA), 216-236 (ILLV…LPFT), and 255-275 (IALL…SIGI). Asp306 (4-aspartylphosphate intermediate) is an active-site residue. ATP is bound by residues Asp343, Glu347, 376-383 (FTATTRMS), and Lys394. Residues Asp517 and Asp521 each coordinate Mg(2+). A run of 3 helical transmembrane segments spans residues 587–607 (FAII…LNLM), 615–635 (AILS…PLSL), and 661–681 (LIAP…LGIV).

This sequence belongs to the cation transport ATPase (P-type) (TC 3.A.3) family. Type IA subfamily. The system is composed of three essential subunits: KdpA, KdpB and KdpC.

The protein resides in the cell membrane. It catalyses the reaction K(+)(out) + ATP + H2O = K(+)(in) + ADP + phosphate + H(+). Its function is as follows. Part of the high-affinity ATP-driven potassium transport (or Kdp) system, which catalyzes the hydrolysis of ATP coupled with the electrogenic transport of potassium into the cytoplasm. This subunit is responsible for energy coupling to the transport system and for the release of the potassium ions to the cytoplasm. In Listeria monocytogenes serovar 1/2a (strain ATCC BAA-679 / EGD-e), this protein is Potassium-transporting ATPase ATP-binding subunit.